A 167-amino-acid chain; its full sequence is Lipoprotein signal peptidase (167 aa).

The next 3 membrane-spanning stretches (helical) occupy residues 10-30 (LIWL…KAWV), 68-88 (WQMW…TFWL), and 98-118 (SALP…DRFL). Catalysis depends on residues Asp-124 and Asp-142. Residues 138 to 158 (FNLADSAIVAGAIGIGLLSLF) form a helical membrane-spanning segment.

The protein belongs to the peptidase A8 family.

The protein resides in the cell inner membrane. It carries out the reaction Release of signal peptides from bacterial membrane prolipoproteins. Hydrolyzes -Xaa-Yaa-Zaa-|-(S,diacylglyceryl)Cys-, in which Xaa is hydrophobic (preferably Leu), and Yaa (Ala or Ser) and Zaa (Gly or Ala) have small, neutral side chains.. The protein operates within protein modification; lipoprotein biosynthesis (signal peptide cleavage). Functionally, this protein specifically catalyzes the removal of signal peptides from prolipoproteins. The chain is Lipoprotein signal peptidase from Xylella fastidiosa (strain 9a5c).